The primary structure comprises 426 residues: 3-phosphoshikimate 1-carboxyvinyltransferase (426 aa).

Residues Lys22, Ser23, and Arg27 each coordinate 3-phosphoshikimate. Residue Lys22 participates in phosphoenolpyruvate binding. Residues Gly96 and Arg124 each coordinate phosphoenolpyruvate. Residues Ser170, Ser171, Gln172, Ser198, Asp314, Asn337, and Lys341 each contribute to the 3-phosphoshikimate site. Gln172 is a phosphoenolpyruvate binding site. The active-site Proton acceptor is the Asp314. The phosphoenolpyruvate site is built by Arg345, Arg387, and Lys412.

Belongs to the EPSP synthase family. As to quaternary structure, monomer.

The protein localises to the cytoplasm. It catalyses the reaction 3-phosphoshikimate + phosphoenolpyruvate = 5-O-(1-carboxyvinyl)-3-phosphoshikimate + phosphate. It participates in metabolic intermediate biosynthesis; chorismate biosynthesis; chorismate from D-erythrose 4-phosphate and phosphoenolpyruvate: step 6/7. Catalyzes the transfer of the enolpyruvyl moiety of phosphoenolpyruvate (PEP) to the 5-hydroxyl of shikimate-3-phosphate (S3P) to produce enolpyruvyl shikimate-3-phosphate and inorganic phosphate. The chain is 3-phosphoshikimate 1-carboxyvinyltransferase from Vibrio campbellii (strain ATCC BAA-1116).